A 240-amino-acid polypeptide reads, in one-letter code: Adapter protein MecA (240 aa).

Over residues 119-132 (QRKQQKKNHQDKQQ) the composition is skewed to basic and acidic residues. The interval 119–138 (QRKQQKKNHQDKQQRRAHKP) is disordered.

This sequence belongs to the MecA family. Homodimer.

Its function is as follows. Enables the recognition and targeting of unfolded and aggregated proteins to the ClpC protease or to other proteins involved in proteolysis. The chain is Adapter protein MecA from Staphylococcus epidermidis (strain ATCC 35984 / DSM 28319 / BCRC 17069 / CCUG 31568 / BM 3577 / RP62A).